Consider the following 596-residue polypeptide: M-phase inducer phosphatase (596 aa).

A phosphoserine mark is found at serine 99 and serine 178. A disordered region spans residues 174–221; the sequence is LSSSSFDSYLRPNVSRSRSSGNAPPFLRSRSSSSYSINKKKGTSGGQA. Residues 429 to 533 enclose the Rhodanese domain; that stretch reads IFDKCIIIDC…FYENHKNRCD (105 aa). The active-site Phosphocysteine intermediate is the cysteine 480.

The protein belongs to the MPI phosphatase family. Interacts with rad24 during G2 in a srk1-dependent manner; the interaction is increased during osmostress. Post-translationally, phosphorylated by srk1 in the N-terminus; phosphorylation promotes nuclear exclusion.

It is found in the cytoplasm. The protein localises to the nucleus. It catalyses the reaction O-phospho-L-tyrosyl-[protein] + H2O = L-tyrosyl-[protein] + phosphate. Functionally, tyrosine protein phosphatase which functions as a dosage-dependent inducer of mitotic and meiotic progression. Directly dephosphorylates cdc2 and stimulates its kinase activity. Required for the G2/M transition of the cell cycle. Required for induction of meiosis II. This is M-phase inducer phosphatase from Schizosaccharomyces pombe (strain 972 / ATCC 24843) (Fission yeast).